A 366-amino-acid chain; its full sequence is MDKEYVGFAALPNQLHRKSVKKGFDFTLMVAGESGLGKSTLINSLFLTNLYEDRQVPDASARTAQTLTIERRGVEIEEGGIKVKLTLVDTPGFGDSVDCSDCWLPVVRFIEEQFEQYLRDESGLNRKNIQDSRVHCCLYFISPFGRGLRPLDVAFLRAVHEKVNIIPVIGKADALMPRETQALKQKIRDQLKEEEINIYQFPECDSDEDEEFKKQNEEMKENIPFAVVGSCEVVRDGTRPVRGRRYSWGTVEVENPHHCDFLNLRRMLVQTHLQDLKEVTHDLLYEGYRARCLQSLARPGARDRASRSKLSRQSATEIPLPMLPLADTEKLIREKDEELRRMQEMLEKMQAQMQQSQAQGEQSDVL.

Positions 22 to 295 constitute a Septin-type G domain; that stretch reads KGFDFTLMVA…EGYRARCLQS (274 aa). Residues 32 to 39 form a G1 motif region; the sequence is GESGLGKS. Residues 32–39, threonine 66, glycine 92, and 171–179 contribute to the GTP site; these read GESGLGKS and KADALMPRE. Residues 89-92 form a G3 motif region; it reads DTPG. The tract at residues 170–173 is G4 motif; sequence GKAD. Serine 206 is modified (phosphoserine). GTP contacts are provided by glycine 229 and arginine 244. Serine 247 carries the phosphoserine modification. The residue at position 250 (threonine 250) is a Phosphothreonine. Phosphoserine; by AURKB occurs at positions 306 and 314. The disordered stretch occupies residues 347-366; it reads EKMQAQMQQSQAQGEQSDVL. Low complexity predominate over residues 349-366; sequence MQAQMQQSQAQGEQSDVL.

It belongs to the TRAFAC class TrmE-Era-EngA-EngB-Septin-like GTPase superfamily. Septin GTPase family. Septins polymerize into heterooligomeric protein complexes that form filaments, and can associate with cellular membranes, actin filaments and microtubules. GTPase activity is required for filament formation. Interacts with AURKB.

It localises to the cytoplasm. It is found in the cytoskeleton. The protein resides in the microtubule organizing center. The protein localises to the centrosome. Its subcellular location is the midbody. Functionally, filament-forming cytoskeletal GTPase. May play a role in cytokinesis (Potential). The chain is Septin-1 from Mus musculus (Mouse).